The primary structure comprises 141 residues: Flagellar assembly factor FliW (141 aa).

This sequence belongs to the FliW family. As to quaternary structure, interacts with translational regulator CsrA and flagellin(s).

Its subcellular location is the cytoplasm. Functionally, acts as an anti-CsrA protein, binds CsrA and prevents it from repressing translation of its target genes, one of which is flagellin. Binds to flagellin and participates in the assembly of the flagellum. This Clostridium beijerinckii (strain ATCC 51743 / NCIMB 8052) (Clostridium acetobutylicum) protein is Flagellar assembly factor FliW.